A 208-amino-acid chain; its full sequence is Large ribosomal subunit protein uL4 (208 aa).

Residues 58 to 77 (RGGGRKPWRQKGTGRARQGS) are disordered. The span at 60–71 (GGRKPWRQKGTG) shows a compositional bias: basic residues.

This sequence belongs to the universal ribosomal protein uL4 family. As to quaternary structure, part of the 50S ribosomal subunit.

Functionally, one of the primary rRNA binding proteins, this protein initially binds near the 5'-end of the 23S rRNA. It is important during the early stages of 50S assembly. It makes multiple contacts with different domains of the 23S rRNA in the assembled 50S subunit and ribosome. Its function is as follows. Forms part of the polypeptide exit tunnel. The polypeptide is Large ribosomal subunit protein uL4 (Caldicellulosiruptor saccharolyticus (strain ATCC 43494 / DSM 8903 / Tp8T 6331)).